Consider the following 983-residue polypeptide: MRRPRRPGGPAGCGGSEGSGGLRLLVCLLLLSGRPGGCSAISAHGCLFDRRLCSHLEVCIQDGLFGQCQAGVGQARPLLQVTSPVLQRLQGVLRQLMSQGLSWHDDLTQYVISQEMERIPRLRPPEPHPRDRSGSVPRRAGPAGELLSQGNPTGSSPAVQGLSRPPGDGNGAGVGSPLSSLQAELLPPLLEHLLMPPQPPHPSLTYEPALLQPYLFQQFGSRDGSRGSESASGVVGHLAKAEDPVLFSRSLSKAILGTHSGHSFGDLTGPSPAQLFQDSGLLYMAQELPVPGRARAPRLPEEGGSSRAEDSSEGHEEEVLGGHGEKSPPQAVQADVSLQRLAAVLAGYGVELRQLTPEQLSTLLTLLQLLPKGTGRHLGGAVNGGADVKKTIEEQMQRGDTADARPPTPLLPGHPTASSTSIKVRQVLSPGFPEPPKTSSPLGISAVLLEKKSPLGQSQPTVVGQPSARPSAEEYGYIVTDQKPLSLVAGVKLLEILAEHVHMTSGSFINISVVGPAVTFRIRHNEQNLSLADVTQQAGLVKSELEAQTGLQILQTGVGQREESAAVLPRQAHGISPMRSLLLTLVALAGVAGLLVALAVALCMRHHSKQRDKERLAALGPEGAHGDTTFEYQDLCRQHMATKSLFNRAEGQPEPSRVSSVSSQFSDAAQASPSSHSSTPSWCEEPAQANMDISTGHMILAYMEDHLRNRDRLAKEWQALCAYQAEPNTCATAQGEGNIKKNRHPDFLPYDHARIKLKVESSPSRSDYINASPIIEHDPRMPAYIATQGPLSHTIADFWQMVWESGCTVIVMLTPLVEDGVKQCDRYWPDEGSSLYHVYEVNLVSEHIWCEDFLVRSFYLKNVQTQETRTLTQFHFLSWPAEGTPASTRPLLDFRRKVNKCYRGRSCPIIVHCSDGAGRTGTYILIDMVLNRMAKGVKEIDIAATLEHVRDQRPGLVRSKDQFEFALTAVAEEVNAILKALPQ.

A signal peptide spans 1–40; it reads MRRPRRPGGPAGCGGSEGSGGLRLLVCLLLLSGRPGGCSA. The interval 41 to 137 is RESP18 homology domain; sequence ISAHGCLFDR…HPRDRSGSVP (97 aa). The Lumenal portion of the chain corresponds to 41–579; that stretch reads ISAHGCLFDR…RQAHGISPMR (539 aa). Residues Cys59 and Cys68 are joined by a disulfide bond. Residues 118 to 133 are compositionally biased toward basic and acidic residues; it reads RIPRLRPPEPHPRDRS. Disordered stretches follow at residues 118–179, 293–330, and 399–420; these read RIPR…SPLS, RARA…SPPQ, and GDTA…ASST. Polar residues predominate over residues 148 to 158; that stretch reads SQGNPTGSSPA. Over residues 307–326 the composition is skewed to basic and acidic residues; it reads RAEDSSEGHEEEVLGGHGEK. 2 positions are modified to phosphoserine: Ser311 and Ser312. Residues 453 to 579 form a sufficient for dimerization of proICA512 region; it reads SPLGQSQPTV…RQAHGISPMR (127 aa). 2 N-linked (GlcNAc...) asparagine glycosylation sites follow: Asn510 and Asn528. Residues 580 to 604 form a helical membrane-spanning segment; the sequence is SLLLTLVALAGVAGLLVALAVALCM. The sufficient for dimerization of proICA512 stretch occupies residues 605–736; that stretch reads RHHSKQRDKE…PNTCATAQGE (132 aa). The Cytoplasmic segment spans residues 605–983; sequence RHHSKQRDKE…VNAILKALPQ (379 aa). Residues 648 to 684 form a disordered region; it reads RAEGQPEPSRVSSVSSQFSDAAQASPSSHSSTPSWCE. The segment covering 652-681 has biased composition (low complexity); the sequence is QPEPSRVSSVSSQFSDAAQASPSSHSSTPS. In terms of domain architecture, Tyrosine-protein phosphatase spans 713 to 973; that stretch reads LAKEWQALCA…EFALTAVAEE (261 aa). Lys758 is covalently cross-linked (Glycyl lysine isopeptide (Lys-Gly) (interchain with G-Cter in SUMO)).

This sequence belongs to the protein-tyrosine phosphatase family. Receptor class 8 subfamily. Homodimer; shown for the unprocessed protein (proICA512) in the endoplasmic reticulum and resolved during protein maturation as ICA512-TMF seems to be predominantly monomeric in secretory granules; however, ICA512-CCF interacts with ICA512-TMF disrupting the ICA512-TMF:SNTB2 complex. The isolated lumenal RESP18 homology domain has been shown to form disulfide-linked homooligomers. Interacts (via cytoplasmic domain) with phosphorylated SNTB2; this protects PTPRN against cleavage by CAPN1 to produce ICA512-CCF. Dephosphorylation of SNTB2 upon insulin stimulation disrupts the interaction and results in PTPRN cleavage. Interacts with SNX19. ICA512-CCF interacts with PIAS4; in the nucleus. Interacts with STAT5B (phosphorylated); down-regulated by ICA512-CCF sumoylation; ICA512-CCF prevents STAT5B dephosphorylation; ICA512-CCF mediates interaction of STAT5B with PIAS4. Interacts (via RESP18 homology domain) with insulin and proinsulin. Interacts with PTPRN2, PTPRA and PTPRE. Subject to proteolytic cleavage at multiple sites. Subject to cleavage on a pair of basic residues. Following exocytosis of secretory granules in pancreatic beta-cells ICA512-TMF located in the plasma-membrane is cleaved by mu-type calpain CPN1 to yield ICA512-CCF. Post-translationally, N-glycosylated. In terms of processing, O-glycosylated. Sumoylated at two sites including Lys-758. Sumoylation decreases interaction with STAT5. Detected in pancreas islets. Detected in pancreas alpha, beta and delta cells, and in chromaffin cells in the adrenal medulla. Detected in amygdala, hypothalamus, autonomous nerve fibers and ganglia, especially at synaptic contacts. Detected in pituitary (at protein level). Detected in brain, specifically in cerebral cortex, diencephalon and brain stem.

It is found in the membrane. The protein resides in the cytoplasmic vesicle. It localises to the secretory vesicle membrane. Its subcellular location is the perikaryon. The protein localises to the cell projection. It is found in the axon. The protein resides in the synapse. It localises to the cell membrane. Its subcellular location is the endosome. The protein localises to the nucleus. Functionally, plays a role in vesicle-mediated secretory processes. Required for normal accumulation of secretory vesicles in hippocampus, pituitary and pancreatic islets. Required for the accumulation of normal levels of insulin-containing vesicles and preventing their degradation. Plays a role in insulin secretion in response to glucose stimuli. Required for normal accumulation of the neurotransmitters norepinephrine, dopamine and serotonin in the brain. In females, but not in males, required for normal accumulation and secretion of pituitary hormones, such as luteinizing hormone (LH) and follicle-stimulating hormone (FSH). Required to maintain normal levels of renin expression and renin release. Seems to lack intrinsic enzyme activity. Its function is as follows. ICA512-TMF regulates dynamics and exocytosis of insulin secretory granules (SGs); binding of ICA512-TMF to SNTB2/beta-2-syntrophin is proposed to restrain SGs mobility and exocytosis by tethering them to the actin cytoskeleton depending on UTRN; the function is inhibited by cytoplasmic ICA512-CFF dimerizing with ICA512-TMF and displacing SNTB2. In terms of biological role, ICA512-CCF translocated to the nucleus promotes expression of insulin and other granule-related genes; the function implicates binding to and regulating activity of STAT5B probably by preventing its dephosphorylation and potentially by inducing its sumoylation by recruiting PIAS4. Enhances pancreatic beta-cell proliferation by converging with signaling by STAT5B and STAT3. ICA512-CCF located in the cytoplasm regulates dynamics and exocytosis of insulin secretory granules (SGs) by dimerizing with ICA512-TMF and displacing SNTB2 thus enhancing SGs mobility and exocytosis. This is Receptor-type tyrosine-protein phosphatase-like N (Ptprn) from Rattus norvegicus (Rat).